A 429-amino-acid chain; its full sequence is 3-phosphoshikimate 1-carboxyvinyltransferase (429 aa).

Lysine 22, serine 23, and arginine 27 together coordinate 3-phosphoshikimate. Phosphoenolpyruvate is bound at residue lysine 22. Glycine 94 and arginine 122 together coordinate phosphoenolpyruvate. Positions 167, 169, 315, and 342 each coordinate 3-phosphoshikimate. Glutamine 169 is a phosphoenolpyruvate binding site. Aspartate 315 acts as the Proton acceptor in catalysis. Phosphoenolpyruvate-binding residues include arginine 346 and arginine 388.

The protein belongs to the EPSP synthase family. As to quaternary structure, monomer.

It is found in the cytoplasm. The enzyme catalyses 3-phosphoshikimate + phosphoenolpyruvate = 5-O-(1-carboxyvinyl)-3-phosphoshikimate + phosphate. The protein operates within metabolic intermediate biosynthesis; chorismate biosynthesis; chorismate from D-erythrose 4-phosphate and phosphoenolpyruvate: step 6/7. Functionally, catalyzes the transfer of the enolpyruvyl moiety of phosphoenolpyruvate (PEP) to the 5-hydroxyl of shikimate-3-phosphate (S3P) to produce enolpyruvyl shikimate-3-phosphate and inorganic phosphate. The chain is 3-phosphoshikimate 1-carboxyvinyltransferase from Geobacter sp. (strain M21).